Here is a 327-residue protein sequence, read N- to C-terminus: DNA-directed RNA polymerase subunit alpha (327 aa).

An alpha N-terminal domain (alpha-NTD) region spans residues 1 to 243 (MEKFLKYEIK…EHLNPIVNVN (243 aa)). The alpha C-terminal domain (alpha-CTD) stretch occupies residues 260-327 (RVRSFAKQIE…VHELGLKLRS (68 aa)).

This sequence belongs to the RNA polymerase alpha chain family. Homodimer. The RNAP catalytic core consists of 2 alpha, 1 beta, 1 beta' and 1 omega subunit. When a sigma factor is associated with the core the holoenzyme is formed, which can initiate transcription.

It catalyses the reaction RNA(n) + a ribonucleoside 5'-triphosphate = RNA(n+1) + diphosphate. DNA-dependent RNA polymerase catalyzes the transcription of DNA into RNA using the four ribonucleoside triphosphates as substrates. This Mycoplasma pneumoniae (strain ATCC 29342 / M129 / Subtype 1) (Mycoplasmoides pneumoniae) protein is DNA-directed RNA polymerase subunit alpha.